We begin with the raw amino-acid sequence, 917 residues long: Protein translocase subunit SecA (917 aa).

ATP-binding positions include Gln87, 105–109 (GEGKT), and Asp513. Residues 834–917 (EEQMNEMEKR…YKSCHGKLTG (84 aa)) are disordered. A compositionally biased stretch (basic and acidic residues) spans 839-852 (EMEKRRQEEAERQR). The span at 862-876 (APSQLAAPATPATPE) shows a compositional bias: low complexity. Zn(2+) is bound by residues Cys900, Cys902, Cys911, and His912.

This sequence belongs to the SecA family. As to quaternary structure, monomer and homodimer. Part of the essential Sec protein translocation apparatus which comprises SecA, SecYEG and auxiliary proteins SecDF-YajC and YidC. Requires Zn(2+) as cofactor.

The protein localises to the cell inner membrane. Its subcellular location is the cytoplasm. The enzyme catalyses ATP + H2O + cellular proteinSide 1 = ADP + phosphate + cellular proteinSide 2.. Functionally, part of the Sec protein translocase complex. Interacts with the SecYEG preprotein conducting channel. Has a central role in coupling the hydrolysis of ATP to the transfer of proteins into and across the cell membrane, serving both as a receptor for the preprotein-SecB complex and as an ATP-driven molecular motor driving the stepwise translocation of polypeptide chains across the membrane. The protein is Protein translocase subunit SecA of Saccharophagus degradans (strain 2-40 / ATCC 43961 / DSM 17024).